The following is a 103-amino-acid chain: ATP synthase F(0) complex subunit g, mitochondrial (103 aa).

Ala-2 carries the N-acetylalanine modification. Lys-11, Lys-24, and Lys-54 each carry N6-acetyllysine.

It belongs to the ATPase g subunit family. As to quaternary structure, component of the ATP synthase complex composed at least of ATP5F1A/subunit alpha, ATP5F1B/subunit beta, ATP5MC1/subunit c (homooctomer), MT-ATP6/subunit a, MT-ATP8/subunit 8, ATP5ME/subunit e, ATP5MF/subunit f, ATP5MG/subunit g, ATP5MK/subunit k, ATP5MJ/subunit j, ATP5F1C/subunit gamma, ATP5F1D/subunit delta, ATP5F1E/subunit epsilon, ATP5PF/subunit F6, ATP5PB/subunit b, ATP5PD/subunit d, ATP5PO/subunit OSCP. ATP synthase complex consists of a soluble F(1) head domain (subunits alpha(3) and beta(3)) - the catalytic core - and a membrane F(0) domain - the membrane proton channel (subunits c, a, 8, e, f, g, k and j). These two domains are linked by a central stalk (subunits gamma, delta, and epsilon) rotating inside the F1 region and a stationary peripheral stalk (subunits F6, b, d, and OSCP).

It localises to the mitochondrion. The protein resides in the mitochondrion inner membrane. Functionally, subunit g, of the mitochondrial membrane ATP synthase complex (F(1)F(0) ATP synthase or Complex V) that produces ATP from ADP in the presence of a proton gradient across the membrane which is generated by electron transport complexes of the respiratory chain. ATP synthase complex consist of a soluble F(1) head domain - the catalytic core - and a membrane F(1) domain - the membrane proton channel. These two domains are linked by a central stalk rotating inside the F(1) region and a stationary peripheral stalk. During catalysis, ATP synthesis in the catalytic domain of F(1) is coupled via a rotary mechanism of the central stalk subunits to proton translocation. In vivo, can only synthesize ATP although its ATP hydrolase activity can be activated artificially in vitro. Part of the complex F(0) domain. The polypeptide is ATP synthase F(0) complex subunit g, mitochondrial (Rattus norvegicus (Rat)).